Reading from the N-terminus, the 70-residue chain is Putative membrane protein insertion efficiency factor (70 aa).

Belongs to the UPF0161 family.

Its subcellular location is the cell membrane. Functionally, could be involved in insertion of integral membrane proteins into the membrane. This chain is Putative membrane protein insertion efficiency factor, found in Rubrobacter xylanophilus (strain DSM 9941 / JCM 11954 / NBRC 16129 / PRD-1).